The sequence spans 724 residues: NAD(+) hydrolase SARM1 (724 aa).

Residues 1–27 (MVLTLLFSAYKLCRFFTMSGPRPGADR) constitute a mitochondrion transit peptide. Positions 24 to 56 (GADRLTVPGPDRSGGASPWWAAGGRGSREVSPG) are disordered. A compositionally biased stretch (low complexity) spans 36–45 (SGGASPWWAA). The stretch at 60-100 (EVQGALERSLPELQQALSELKQASAARAVGAGLAEVFQLVE) is one ARM 1 repeat. Residues W103, R110, 149–157 (EQILVAENR), and 190–193 (HMFK) each bind NAD(+). ARM repeat units follow at residues 114-153 (QGLC…QILV), 155-193 (ENRD…HMFK), 196-235 (EETC…NCAL), 237-280 (GGQT…LATN), 281-314 (KEVE…CLVD), 315-354 (ASDT…AEAA), and 359-402 (QGKT…EEVP). 2 consecutive SAM domains span residues 412-476 (WKEA…LKTF) and 486-548 (NLAD…MLHS). A phosphoserine mark is found at S548 and S558. Positions 560–703 (DTPDVFISYR…KIIRFLQGRP (144 aa)) constitute a TIR domain. NAD(+) contacts are provided by residues 569 to 570 (RR) and E599. The active site involves E642. A compositionally biased stretch (polar residues) spans 703–716 (PSQDSSAGSDTSLE). A disordered region spans residues 703-724 (PSQDSSAGSDTSLEGATPMGLP).

It belongs to the SARM1 family. In terms of assembly, homooctamer; forms an octameric ring via SAM domains. Interacts with TICAM1/TRIF and thereby interferes with TICAM1/TRIF function. Interacts with SDC2 (via cytoplasmic domain) and MAPK10/JNK3. In terms of processing, phosphorylation at Ser-548 by JNK kinases (MAPK8, MAPK9 and /or MAPK10) enhance the NAD(+) hydrolase (NADase) activity. Phosphorylation at Ser-548 and subsequent activation takes place in response to oxidative stress conditions and inhibits mitochondrial respiration. In terms of tissue distribution, widely expressed in the brain and neurons (at protein level). Expressed in photoreceptor cells of the neural retina.

The protein localises to the cytoplasm. It is found in the cell projection. Its subcellular location is the axon. The protein resides in the dendrite. It localises to the synapse. The protein localises to the mitochondrion. It catalyses the reaction NAD(+) + H2O = ADP-D-ribose + nicotinamide + H(+). It carries out the reaction NAD(+) = cyclic ADP-beta-D-ribose + nicotinamide + H(+). The enzyme catalyses NADP(+) + H2O = ADP-D-ribose 2'-phosphate + nicotinamide + H(+). Its activity is regulated as follows. Autoinhibited: in the inactive state, the enzymatic TIR domain is held apart by the autoinhibiting ARM repeats. NAD(+)-binding to ARM repeats maintains an inactive state by promoting interaction between ARM repeats and the TIR domain, thereby facilitating inhibition of the enzymatic TIR domain. Following activation, possibly by nicotinamide mononucleotide (NMN), auto-inhibitory interactions are released, allowing self-association of the TIR domains and subsequent activation of the NAD(+) hydrolase (NADase) activity. Self-association of TIR domains is facilitated by the octamer of SAM domains. Its function is as follows. NAD(+) hydrolase, which plays a key role in axonal degeneration following injury by regulating NAD(+) metabolism. Acts as a negative regulator of MYD88- and TRIF-dependent toll-like receptor signaling pathway by promoting Wallerian degeneration, an injury-induced form of programmed subcellular death which involves degeneration of an axon distal to the injury site. Wallerian degeneration is triggered by NAD(+) depletion: in response to injury, SARM1 is activated and catalyzes cleavage of NAD(+) into ADP-D-ribose (ADPR), cyclic ADPR (cADPR) and nicotinamide; NAD(+) cleavage promoting cytoskeletal degradation and axon destruction. Also able to hydrolyze NADP(+), but not other NAD(+)-related molecules. Can activate neuronal cell death in response to stress. Regulates dendritic arborization through the MAPK4-JNK pathway. Involved in innate immune response: inhibits both TICAM1/TRIF- and MYD88-dependent activation of JUN/AP-1, TRIF-dependent activation of NF-kappa-B and IRF3, and the phosphorylation of MAPK14/p38. This chain is NAD(+) hydrolase SARM1, found in Mus musculus (Mouse).